A 407-amino-acid chain; its full sequence is MEGSVSEFLTVRLSSQKEADIPWLVWSAEQQEVIASGQVAGWEALHEIESYADQRSVVVLLAASDLILTSVEIPPGASRQLENMLPYLLEDEIAQDVEDVHFCVLSKGRETADVVGVDRLWLRACLDHLKACGFDVKRVLPDVLAIPRPEHGLAALQLGDEWLVRKSTTQGMAVDAQWLSLLAASDWVQNEGEYLPLQALTPLPELSLAETQEWRYEPSGLVMQLLTQEALTSKFNLLTGSFKLKSSWLRYWQIWRKVAIAAGLFVAVSISYSLFQAHQYEAQADAYRAESERIFRSIFPDKQKIPTVTYLKRQMSDEMARLSGGASVGSVLKWLSPLPEALKGVNLQLQSIKFDSNRSEIRLEATSRDFQSFEQARTQLEQYFAVEQGQLNKNGEQVFGVFVVKPK.

Residues 1–257 (MEGSVSEFLT…WLRYWQIWRK (257 aa)) are Cytoplasmic-facing. Residues 258–275 (VAIAAGLFVAVSISYSLF) traverse the membrane as a helical segment. Over 276-407 (QAHQYEAQAD…VFGVFVVKPK (132 aa)) the chain is Periplasmic.

It belongs to the GSP L family. As to quaternary structure, type II secretion system is composed of four main components: the outer membrane complex, the inner membrane complex, the cytoplasmic secretion ATPase and the periplasm-spanning pseudopilus. Forms homodimers. Interacts with EpsM/GspM. Interacts with EpsE/GspE and EpsF/GspF.

The protein resides in the cell inner membrane. In terms of biological role, inner membrane component of the type II secretion system required for the energy-dependent secretion of extracellular factors such as proteases and toxins from the periplasm. Plays a role in the complex assembly and recruits EpsM resulting in a stable complex in the inner membrane. Provides thus a link between the energy-providing EpsE protein in the cytoplasm and the rest of the T2SS machinery. In Vibrio cholerae serotype O1 (strain ATCC 39315 / El Tor Inaba N16961), this protein is Type II secretion system protein L (epsL).